The chain runs to 91 residues: Protein SPATA45 homolog (91 aa).

Residues 42–91 (RADRKHDPNGFNSSVFKGASNQHQESSLDFATAEPEFHRERRHFPEKSEY) form a disordered region. A compositionally biased stretch (polar residues) spans 51-70 (GFNSSVFKGASNQHQESSLD). Basic and acidic residues predominate over residues 76–91 (PEFHRERRHFPEKSEY).

Belongs to the SPATA45 family.

This chain is Protein SPATA45 homolog, found in Nematostella vectensis (Starlet sea anemone).